The sequence spans 1077 residues: MPRRKQQAPRRSAAYVPEEELKAAEIDEEHVEDDGLSLDIQESEYMCNEETEIKEAQSYQNSPVSSATNQDAGYGSPFSESSDQLAHFKGSSSREEKEDPQCPDSVSYPQDSLAQIKAVYANLFSESCWSSLALDLKKSGSTTSTNDASQKESSAPTPTPPTCPVSTTGPTTSTPSTSCSSSTSHSSTTSTSSSSGYDWHQAALAKTLQQTSSYGLLPEPSLFSTVQLYRQNNKLYGSVFTGASKFRCKDCSAAYDTLVELTVHMNETGHYRDDNRDKDSEKTKRWSKPRKRSLMEMEGKEDAQKVLKCMYCGHSFESLQDLSVHMIKTKHYQKVPLKEPVPAITKLVPSTKKRALQDLAPPCSPEPAGMAAEVALSESAKDQKAANPYVTPNNRYGYQNGASYTWQFEARKAQILKCMECGSSHDTLQQLTAHMMVTGHFLKVTTSASKKGKQLVLDPVVEEKIQSIPLPPTTHTRLPASSIKKQPDSPAGSTTSEEKKEPEKEKPPVAGDAEKIKEESEDSLEKFEPSTLYPYLREEDLDDSPKGGLDILKSLENTVSTAISKAQNGAPSWGGYPSIHAAYQLPGTVKPLPAAVQSVQVQPSYAGGVKSLSSAEHNALLHSPGSLTPPPHKSNVSAMEELVEKVTGKVNIKKEERPPEKEKSSLAKAASPIAKENKDFPKTEEVSGKPQKKGPEAETGKAKKEGPLDVHTPNGTEPLKAKVTNGCNNLGIIMDHSPEPSFINPLSALQSIMNTHLGKVSKPVSPSLDPLAMLYKISNSMLDKPVYPATPVKQADAIDRYYYENSDQPIDLTKSKNKPLVSSVADSVASPLRESALMDISDMVKNLTGRLTPKSSTPSTVSEKSDADGSSFEEALDELSPVHKRKGRQSNWNPQHLLILQAQFASSLRETTEGKYIMSDLGPQERVHISKFTGLSMTTISHWLANVKYQLRRTGGTKFLKNLDTGHPVFFCNDCASQFRTASTYISHLETHLGFSLKDLSKLPLNQIQEQQNVSKVLTNKTLGPLGATEEDLGSTFQCKLCNRTFASKHAVKLHLSKTHGKSPEDHLIYVTELEKQ.

Disordered regions lie at residues 1-109 (MPRR…VSYP), 139-195 (SGST…SSSS), and 269-298 (GHYR…MEME). Over residues 26–36 (IDEEHVEDDGL) the composition is skewed to acidic residues. Composition is skewed to polar residues over residues 57 to 71 (QSYQ…TNQD) and 139 to 152 (SGST…SQKE). The segment covering 164–195 (PVSTTGPTTSTPSTSCSSSTSHSSTTSTSSSS) has biased composition (low complexity). 2 consecutive C2H2-type zinc fingers follow at residues 246 to 270 (FRCK…ETGH) and 307 to 331 (LKCM…KTKH). Positions 269 to 284 (GHYRDDNRDKDSEKTK) are enriched in basic and acidic residues. A C2H2-type 3; atypical zinc finger spans residues 416 to 440 (LKCMECGSSHDTLQQLTAHMMVTGH). Disordered regions lie at residues 467–549 (SIPL…KGGL) and 647–720 (TGKV…EPLK). Composition is skewed to basic and acidic residues over residues 496–528 (SEEK…EKFE), 647–665 (TGKV…EKSS), and 675–708 (KENK…EGPL). At Ser765 the chain carries Phosphoserine. Residues 848–873 (TGRLTPKSSTPSTVSEKSDADGSSFE) are disordered. The segment covering 853-862 (PKSSTPSTVS) has biased composition (polar residues). Positions 885–955 (RKGRQSNWNP…NVKYQLRRTG (71 aa)) form a DNA-binding region, homeobox; atypical. C2H2-type zinc fingers lie at residues 970–992 (FFCN…LETH) and 1037–1060 (FQCK…SKTH).

It belongs to the teashirt C2H2-type zinc-finger protein family. In terms of assembly, interacts (via homeobox domain) with APBB1 (via PID domain 1). As to expression, expressed in brain; strongly reduced in post-mortem elderly subjects with Alzheimer disease.

It is found in the nucleus. Its function is as follows. Probable transcriptional regulator involved in developmental processes. May act as a transcriptional repressor (Potential). The protein is Teashirt homolog 1 (TSHZ1) of Homo sapiens (Human).